A 274-amino-acid polypeptide reads, in one-letter code: 4-deoxy-L-threo-5-hexosulose-uronate ketol-isomerase (274 aa).

Zn(2+) contacts are provided by His192, His194, Glu199, and His241.

This sequence belongs to the KduI family. Requires Zn(2+) as cofactor.

It catalyses the reaction 5-dehydro-4-deoxy-D-glucuronate = 3-deoxy-D-glycero-2,5-hexodiulosonate. Its pathway is glycan metabolism; pectin degradation; 2-dehydro-3-deoxy-D-gluconate from pectin: step 4/5. Its function is as follows. Catalyzes the isomerization of 5-dehydro-4-deoxy-D-glucuronate to 3-deoxy-D-glycero-2,5-hexodiulosonate. This is 4-deoxy-L-threo-5-hexosulose-uronate ketol-isomerase from Agrobacterium fabrum (strain C58 / ATCC 33970) (Agrobacterium tumefaciens (strain C58)).